Here is a 145-residue protein sequence, read N- to C-terminus: 3-hydroxyacyl-[acyl-carrier-protein] dehydratase FabZ (145 aa).

His-51 is a catalytic residue.

Belongs to the thioester dehydratase family. FabZ subfamily.

Its subcellular location is the cytoplasm. The enzyme catalyses a (3R)-hydroxyacyl-[ACP] = a (2E)-enoyl-[ACP] + H2O. Functionally, involved in unsaturated fatty acids biosynthesis. Catalyzes the dehydration of short chain beta-hydroxyacyl-ACPs and long chain saturated and unsaturated beta-hydroxyacyl-ACPs. The chain is 3-hydroxyacyl-[acyl-carrier-protein] dehydratase FabZ from Staphylococcus carnosus (strain TM300).